The chain runs to 64 residues: Large ribosomal subunit protein bL35 (64 aa).

Belongs to the bacterial ribosomal protein bL35 family.

The polypeptide is Large ribosomal subunit protein bL35 (Ureaplasma urealyticum serovar 10 (strain ATCC 33699 / Western)).